The sequence spans 591 residues: Aspartate--tRNA(Asp/Asn) ligase (591 aa).

E174 serves as a coordination point for L-aspartate. Residues 198 to 201 (QLFK) form an aspartate region. Residue R220 coordinates L-aspartate. ATP contacts are provided by residues 220–222 (RDE) and Q229. H450 is a binding site for L-aspartate. E483 serves as a coordination point for ATP. R490 lines the L-aspartate pocket. 535–538 (GLDR) is an ATP binding site.

The protein belongs to the class-II aminoacyl-tRNA synthetase family. Type 1 subfamily. As to quaternary structure, homodimer.

It is found in the cytoplasm. It catalyses the reaction tRNA(Asx) + L-aspartate + ATP = L-aspartyl-tRNA(Asx) + AMP + diphosphate. Aspartyl-tRNA synthetase with relaxed tRNA specificity since it is able to aspartylate not only its cognate tRNA(Asp) but also tRNA(Asn). Reaction proceeds in two steps: L-aspartate is first activated by ATP to form Asp-AMP and then transferred to the acceptor end of tRNA(Asp/Asn). This Pseudomonas putida (strain W619) protein is Aspartate--tRNA(Asp/Asn) ligase.